A 734-amino-acid polypeptide reads, in one-letter code: MSTPCSGNEPATPTNTSPNNETSNSCLSMGVGVASNETNSSRELKIFKKVIRDPVLRAPFQEFLEQQFCAENLNFYLAVEQFKEIQDFQERSSFGRRIFDRYFAMNSTEPVNIDNSTSKRIRETVESGGFPLDTYDVAQYQILHLLKYDCWPRFLRSTNNSQPSFTDEELAADDEDKNGHSQPTSLNNTNEFEAAAQQSQPAPNAPAATKEKPSKQYSMPAEMTSPVKKNSLSPTHLRRCRPVEPKHCQLMIGDQFNTETVTLSDPTMSVRRWTQEMADAQGMDRMHVEVVDAETGSTIDPARQAIDALQSRALRLVPVVSFIIEFLPANFSFKNPASTPTKLVCIRARHSLSTGAVLRPLLHKYTLDPQVTRIVLNGSLEQVKRSCAVGQVSQKCLTVMSEAQYSDRVNAGKVSLPPRDPILSQLPSTIYEQNNFPFHQNGDISYCEIPNESERNKHAHLQHDGPNAAHQQKEYTLSIFNKFVRKASHAVSKSDPNPSAGTSQDRMASGVYSPATGGPSFASRAAAGTNFGGSANQVNAGSASTSSNNVSEPSKNRLSIFKSKTEKKVVKPESEKEKLKPRSDDIPTTSTSTPMAVETKPNGSRTTEEPLKRMGKSGDDGSQEPQGIRHPAIFSTKIGDEAAAAAAGASPSTSAPSTSTSVQTKTTTSPTKSPTSTTITTSGTTTSATSSVATAPPPVLHAMRSASTPATSSQLTGGGGGNPRESSWQTAAYV.

Residues 1-24 (MSTPCSGNEPATPTNTSPNNETSN) form a disordered region. Positions 8 to 24 (NEPATPTNTSPNNETSN) are enriched in low complexity. In terms of domain architecture, RGS spans 46-157 (IFKKVIRDPV…YDCWPRFLRS (112 aa)). Disordered stretches follow at residues 162–236 (QPSF…SPTH), 489–515 (HAVS…YSPA), and 538–734 (VNAG…AAYV). The segment covering 166 to 176 (TDEELAADDED) has biased composition (acidic residues). Residues 180–191 (HSQPTSLNNTNE) show a composition bias toward polar residues. The segment covering 194–208 (AAAQQSQPAPNAPAA) has biased composition (low complexity). Polar residues-rich tracts occupy residues 494–506 (SDPN…SQDR) and 538–557 (VNAG…SKNR). Basic and acidic residues-rich tracts occupy residues 563 to 585 (SKTE…RSDD) and 606 to 619 (TTEE…KSGD). Residues 642–694 (AAAAAAGASPSTSAPSTSTSVQTKTTTSPTKSPTSTTITTSGTTTSATSSVAT) are compositionally biased toward low complexity. Composition is skewed to polar residues over residues 705 to 715 (SASTPATSSQL) and 724 to 734 (RESSWQTAAYV).

The polypeptide is Regulator of G-protein signaling rgs-6 (Caenorhabditis elegans).